A 69-amino-acid chain; its full sequence is Large ribosomal subunit protein bL31 (69 aa).

Residues Cys-17, Cys-19, Cys-37, and Cys-40 each contribute to the Zn(2+) site.

Belongs to the bacterial ribosomal protein bL31 family. Type A subfamily. In terms of assembly, part of the 50S ribosomal subunit. Requires Zn(2+) as cofactor.

Functionally, binds the 23S rRNA. In Caldicellulosiruptor saccharolyticus (strain ATCC 43494 / DSM 8903 / Tp8T 6331), this protein is Large ribosomal subunit protein bL31.